We begin with the raw amino-acid sequence, 256 residues long: Ubiquinone/menaquinone biosynthesis C-methyltransferase UbiE (256 aa).

S-adenosyl-L-methionine-binding positions include Thr79, Asp100, and 128 to 129; that span reads DA.

It belongs to the class I-like SAM-binding methyltransferase superfamily. MenG/UbiE family.

The enzyme catalyses a 2-demethylmenaquinol + S-adenosyl-L-methionine = a menaquinol + S-adenosyl-L-homocysteine + H(+). It carries out the reaction a 2-methoxy-6-(all-trans-polyprenyl)benzene-1,4-diol + S-adenosyl-L-methionine = a 5-methoxy-2-methyl-3-(all-trans-polyprenyl)benzene-1,4-diol + S-adenosyl-L-homocysteine + H(+). It functions in the pathway quinol/quinone metabolism; menaquinone biosynthesis; menaquinol from 1,4-dihydroxy-2-naphthoate: step 2/2. It participates in cofactor biosynthesis; ubiquinone biosynthesis. Functionally, methyltransferase required for the conversion of demethylmenaquinol (DMKH2) to menaquinol (MKH2) and the conversion of 2-polyprenyl-6-methoxy-1,4-benzoquinol (DDMQH2) to 2-polyprenyl-3-methyl-6-methoxy-1,4-benzoquinol (DMQH2). The chain is Ubiquinone/menaquinone biosynthesis C-methyltransferase UbiE from Pseudomonas aeruginosa (strain LESB58).